Reading from the N-terminus, the 119-residue chain is MNKILSSTVCFGLLTLLSVLSFLQSVHGRPYLTQGNEIFPDKKYTNREELLLALLNKNFDFQRPFNTDLALPNKLEELNQLEKLKEQLVEEKDSETSYAVDGLFSSHPSKRACFWKYCV.

The N-terminal stretch at Met1–Gly28 is a signal peptide. Positions Arg29–Ser109 are excised as a propeptide. The cysteines at positions 113 and 118 are disulfide-linked.

It belongs to the urotensin-2 family.

It is found in the secreted. Potent vasoconstrictor. The sequence is that of Urotensin-2B (UTS2B) from Homo sapiens (Human).